Consider the following 113-residue polypeptide: Ribosome-binding factor A (113 aa).

It belongs to the RbfA family. In terms of assembly, monomer. Binds 30S ribosomal subunits, but not 50S ribosomal subunits or 70S ribosomes.

It localises to the cytoplasm. Functionally, one of several proteins that assist in the late maturation steps of the functional core of the 30S ribosomal subunit. Associates with free 30S ribosomal subunits (but not with 30S subunits that are part of 70S ribosomes or polysomes). Required for efficient processing of 16S rRNA. May interact with the 5'-terminal helix region of 16S rRNA. This Lactococcus lactis subsp. cremoris (Streptococcus cremoris) protein is Ribosome-binding factor A.